A 207-amino-acid polypeptide reads, in one-letter code: LysM and putative peptidoglycan-binding domain-containing protein 2 (207 aa).

One can recognise a LysM domain in the interval 61 to 105; the sequence is IEHRLSPSDTLQGIALKYGVTMEQIKRANKLFSTDCIFLRKSLNI. The segment at 186–207 is disordered; sequence AQRLKEEDLRHDDSYATCSYQH. Residues 188-199 are compositionally biased toward basic and acidic residues; that stretch reads RLKEEDLRHDDS.

This Xenopus tropicalis (Western clawed frog) protein is LysM and putative peptidoglycan-binding domain-containing protein 2 (lysmd2).